Here is a 141-residue protein sequence, read N- to C-terminus: Transcription antitermination protein NusB (141 aa).

Belongs to the NusB family.

Involved in transcription antitermination. Required for transcription of ribosomal RNA (rRNA) genes. Binds specifically to the boxA antiterminator sequence of the ribosomal RNA (rrn) operons. This chain is Transcription antitermination protein NusB, found in Neisseria meningitidis serogroup B (strain ATCC BAA-335 / MC58).